The chain runs to 581 residues: MKASRFFVSTLKEAPADAEVASHRLMMRAGMIKKLGTGIYTYMPMGLRVIRKVEAIVREEMNRAGAVELTMPVVQPAEFWQETGRFDKMGPELLRIKDRHDRDFVVQPTSEEVVTDIARQEIRSYKQLPKNFYQIQTKFRDERRPRFGLMRGREFIMKDAYSFDRDLDAAKASYQAMADAYRRIFDRFGLRYRAVAADSGAIGGDLSEEFQVIAATGEDAIVYCPGSDYAANMEKAEALAPAGPRPAAAKALEKTPTPGKSTCADVAELLGVPLSTTVKSLVLATDILDEAGNPKGSQVWLLLLRGDHDMNEIKVGKVPGLDKGFRFATLAEIDDHFGCKPGYLGPLNLKKPVRLVADREVMVMADWITGANEVDFHMTGVNWGRDLPEPELVADLRNVVAGDASPDGKGVLAIERGIEVGHVFVLGTKYSKDMNATYLDEAGKPQFLEMGCYGIGITRLPAAAIEQNHDERGIIWPDALAPFTVVVCPIGMDRSPEVKVAAEALYEQLLAAGVDVLLDDRGERPGAMFADWELIGVPHRVVISDRGLKEGQLEYQHRRDTAATKVPAAGIAEFIAGKFAQ.

Belongs to the class-II aminoacyl-tRNA synthetase family. ProS type 1 subfamily. As to quaternary structure, homodimer.

It localises to the cytoplasm. The catalysed reaction is tRNA(Pro) + L-proline + ATP = L-prolyl-tRNA(Pro) + AMP + diphosphate. In terms of biological role, catalyzes the attachment of proline to tRNA(Pro) in a two-step reaction: proline is first activated by ATP to form Pro-AMP and then transferred to the acceptor end of tRNA(Pro). As ProRS can inadvertently accommodate and process non-cognate amino acids such as alanine and cysteine, to avoid such errors it has two additional distinct editing activities against alanine. One activity is designated as 'pretransfer' editing and involves the tRNA(Pro)-independent hydrolysis of activated Ala-AMP. The other activity is designated 'posttransfer' editing and involves deacylation of mischarged Ala-tRNA(Pro). The misacylated Cys-tRNA(Pro) is not edited by ProRS. The chain is Proline--tRNA ligase from Variovorax paradoxus (strain S110).